The chain runs to 464 residues: MSVEKTNQSWGGRFSEPVDAFVARFTASVDFDKRLYRHDIMGSIAHATMLAKVGVLSDAERDAIVDGLQQIQAEIEAGSFDWRVDLEDVHMNIEARLTDRIGVTGKKLHTGRSRNDQVATDIRLWLRDEIDTILAEITRLQEGLLGLAEAEADTIMPGFTHLQTAQPVTFGHHLLAWFEMLGRDYERLVDCRKRVNRMPLGSAALAGTTYPIQREITCQLLGFDAVGGNSLDGVSDRDFAIEFCAAASLAMMHLSRFSEELVLWTSAQFQFIDLPDRFCTGSSIMPQKKNPDVPELVRGKSGRVFGALTGLLTLMKGQPLAYNKDNQEDKEPLFDAADTLRDSLRAFADMVPAIRPRREIMREAARRGFSTATDLADYLVRKGLPFRDCHEIVGHAVKYGVDSGKDLAEMSLDELRRFSEQIDADVFDVLTLEGSVNARDHIGGTAPNQVRAAVARGRQLLAQR.

It belongs to the lyase 1 family. Argininosuccinate lyase subfamily.

The protein resides in the cytoplasm. It catalyses the reaction 2-(N(omega)-L-arginino)succinate = fumarate + L-arginine. Its pathway is amino-acid biosynthesis; L-arginine biosynthesis; L-arginine from L-ornithine and carbamoyl phosphate: step 3/3. This chain is Argininosuccinate lyase, found in Pseudomonas aeruginosa (strain UCBPP-PA14).